Reading from the N-terminus, the 881-residue chain is Ent-kaurene synthase CPS/KS, chloroplastic (881 aa).

A chloroplast-targeting transit peptide spans methionine 1–glutamine 41. Aspartate 417, aspartate 419, aspartate 635, aspartate 639, asparagine 778, aspartate 779, and glutamate 786 together coordinate Mg(2+). The DXDDTA motif signature appears at aspartate 417–alanine 422. The DDXXD motif motif lies at aspartate 635–aspartate 639.

Belongs to the terpene synthase family. Requires Mg(2+) as cofactor.

Its subcellular location is the plastid. It localises to the chloroplast. The enzyme catalyses (2E,6E,10E)-geranylgeranyl diphosphate = ent-copalyl diphosphate. It carries out the reaction ent-copalyl diphosphate = ent-kaur-16-ene + diphosphate. It catalyses the reaction ent-copalyl diphosphate = ent-beyerene + diphosphate. The catalysed reaction is ent-copalyl diphosphate = ent-sandaracopimara-8(14),15-diene + diphosphate. The enzyme catalyses ent-copalyl diphosphate = ent-isokaurene + diphosphate. It carries out the reaction ent-copalyl diphosphate + H2O = 16alpha-hydroxy-ent-kaurene + diphosphate. It participates in secondary metabolite biosynthesis; terpenoid biosynthesis. Its function is as follows. Bifunctional copalyl diphosphate/kaurene synthase involved in the biosynthesis of labdane-related diterpenoids (LRDs) natural products such as ent-beyerene, an antimicrobial compound. Supports the conversion of geranylgeranyl diphosphate (GGPP) to ent-copalyl diphosphate (ent-CDP). Also catalyzes the subsequent cyclization of ent-CDP into many diterpenes, including ent-kaur-16-ene as the major product, and ent-beyerene, ent-sandaracopimaradiene, ent-kaur-15-ene (ent-isokaurene) and 16-hydroxy-ent-kaurene (ent-16-alpha-hydroxy-kaurene) as minor products. This is Ent-kaurene synthase CPS/KS, chloroplastic from Physcomitrium patens (Spreading-leaved earth moss).